The chain runs to 157 residues: MFDILIYLFENYIHNESRISIDYDSLTNDLSDIGFQRRDIYNALSWLKNLSCYKKNIIPSINPLSNKITIRIYTQEESLKLNVDCRGFILFLEQLEILTLDTREVIIERIMELDINELNLEDLKWIVLIVLFNVPGCESAYHKLENLLFNFKEDIIH.

The protein belongs to the Smg family.

In Buchnera aphidicola subsp. Acyrthosiphon pisum (strain 5A), this protein is Protein Smg.